Here is a 308-residue protein sequence, read N- to C-terminus: NAD kinase (308 aa).

Catalysis depends on aspartate 86, which acts as the Proton acceptor. NAD(+)-binding positions include 86–87 (DG), arginine 91, 160–161 (NE), aspartate 190, and 201–206 (TAYAFS).

This sequence belongs to the NAD kinase family. Requires a divalent metal cation as cofactor.

The protein localises to the cytoplasm. It catalyses the reaction NAD(+) + ATP = ADP + NADP(+) + H(+). Its function is as follows. Involved in the regulation of the intracellular balance of NAD and NADP, and is a key enzyme in the biosynthesis of NADP. Catalyzes specifically the phosphorylation on 2'-hydroxyl of the adenosine moiety of NAD to yield NADP. This is NAD kinase from Mycolicibacterium paratuberculosis (strain ATCC BAA-968 / K-10) (Mycobacterium paratuberculosis).